Reading from the N-terminus, the 374-residue chain is N5-carboxyaminoimidazole ribonucleotide synthase (374 aa).

Residues Arg108, Lys148, Gly153–Gln159, Glu183–Leu186, Glu191, His214, and Asn266–Glu267 each bind ATP. Residues Lys112–Thr296 form the ATP-grasp domain.

Belongs to the PurK/PurT family. In terms of assembly, homodimer.

The enzyme catalyses 5-amino-1-(5-phospho-beta-D-ribosyl)imidazole + hydrogencarbonate + ATP = 5-carboxyamino-1-(5-phospho-D-ribosyl)imidazole + ADP + phosphate + 2 H(+). It functions in the pathway purine metabolism; IMP biosynthesis via de novo pathway; 5-amino-1-(5-phospho-D-ribosyl)imidazole-4-carboxylate from 5-amino-1-(5-phospho-D-ribosyl)imidazole (N5-CAIR route): step 1/2. Functionally, catalyzes the ATP-dependent conversion of 5-aminoimidazole ribonucleotide (AIR) and HCO(3)(-) to N5-carboxyaminoimidazole ribonucleotide (N5-CAIR). The sequence is that of N5-carboxyaminoimidazole ribonucleotide synthase from Staphylococcus aureus (strain MRSA252).